The following is a 55-amino-acid chain: Large ribosomal subunit protein bL33 (55 aa).

Belongs to the bacterial ribosomal protein bL33 family.

This Parvibaculum lavamentivorans (strain DS-1 / DSM 13023 / NCIMB 13966) protein is Large ribosomal subunit protein bL33.